We begin with the raw amino-acid sequence, 300 residues long: Epimerase family protein MW0731 (300 aa).

It belongs to the NAD(P)-dependent epimerase/dehydratase family. SDR39U1 subfamily.

This chain is Epimerase family protein MW0731, found in Staphylococcus aureus (strain MW2).